The chain runs to 284 residues: Bifunctional protein FolD (284 aa).

NADP(+) contacts are provided by residues 166 to 168 (GAS) and I232.

The protein belongs to the tetrahydrofolate dehydrogenase/cyclohydrolase family. As to quaternary structure, homodimer.

The enzyme catalyses (6R)-5,10-methylene-5,6,7,8-tetrahydrofolate + NADP(+) = (6R)-5,10-methenyltetrahydrofolate + NADPH. It carries out the reaction (6R)-5,10-methenyltetrahydrofolate + H2O = (6R)-10-formyltetrahydrofolate + H(+). It functions in the pathway one-carbon metabolism; tetrahydrofolate interconversion. Its function is as follows. Catalyzes the oxidation of 5,10-methylenetetrahydrofolate to 5,10-methenyltetrahydrofolate and then the hydrolysis of 5,10-methenyltetrahydrofolate to 10-formyltetrahydrofolate. This chain is Bifunctional protein FolD, found in Shewanella frigidimarina (strain NCIMB 400).